The sequence spans 337 residues: G-protein coupled receptor 65 (337 aa).

Residues 1-5 (MNSTC) lie on the Extracellular side of the membrane. N-linked (GlcNAc...) asparagine glycosylation occurs at N2. 2 disulfide bridges follow: C5–C160 and C87–C170. A helical transmembrane segment spans residues 6-42 (IEEQHDLDHYLFPIVYIFVIIVSIPANIGSLCVSFLQ). At 43–46 (AKKE) the chain is on the cytoplasmic side. A helical transmembrane segment spans residues 47 to 77 (SELGIYLFSLSLSDLLYALTLPLWIDYTWNK). Topologically, residues 78-82 (DNWTF) are extracellular. N79 carries an N-linked (GlcNAc...) asparagine glycan. The helical transmembrane segment at 83–118 (SPALCKGSAFLMYMNFYSSTAFLTCIAVDRYLAVVY) threads the bilayer. At 119–126 (PLKFFFLR) the chain is on the cytoplasmic side. A helical transmembrane segment spans residues 127 to 153 (TRRFALMVSLSIWILETIFNAVMLWED). The Extracellular portion of the chain corresponds to 154–174 (ETVVEYCDAEKSNFTLCYDKY). An extracellular loop 2 (ECL2) region spans residues 154-174 (ETVVEYCDAEKSNFTLCYDKY). N-linked (GlcNAc...) asparagine glycosylation is present at N166. Residues 175 to 212 (PLEKWQINLNLFRTCTGYAIPLVTILICNRKVYQAVRH) traverse the membrane as a helical segment. Residues 213 to 216 (NKAT) are Cytoplasmic-facing. Residues 217 to 252 (ENKEKKRIIKLLVSITVTFVLCFTPFHVMLLIRCIL) traverse the membrane as a helical segment. Residues 253–264 (EHAVNFEDHSNS) are Extracellular-facing. A helical membrane pass occupies residues 265–293 (GKRTYTMYRITVALTSLNCVADPILYCFV). Topologically, residues 294–337 (TETGRYDMWNILKFCTGRCNTSQRQRKRILSVSTKDTMELEVLE) are cytoplasmic.

Belongs to the G-protein coupled receptor 1 family. As to expression, predominantly expressed in thymus, spleen, lymph nodes, small intestine, lung, placenta and peripheral blood leukocytes.

It is found in the cell membrane. The protein localises to the early endosome membrane. It localises to the late endosome membrane. Activated by a network of residues that connects an extracellular-facing cavity to Glu-142, a conserved charged residue buried in the transmembrane core of the receptor. Protonation likely drives conformational changes in extracellular loop 2 (ECL2), which stabilizes movement of transmembrane 3 (TM3) and a series of rearrangements that connect the extracellular-facing cavity to Glu-142, a residue only conserved in proton-sensing G-protein coupled receptors. Activated by BTB09089, a positive allosteric modulator. Functionally, proton-sensing G-protein coupled receptor activated by extracellular pH, which is required to monitor pH changes and generate adaptive reactions. Activated by an optimal pH of 7.4. Ligand binding causes a conformation change that triggers signaling via guanine nucleotide-binding proteins (G proteins) and modulates the activity of downstream effectors, such as adenylate cyclase. GPR65 is mainly coupled to G(s) G proteins and mediates activation of adenylate cyclase activity. May also act as a receptor for the glycosphingolipid psychosine (PSY) and several related glycosphingolipids. Plays a role in immune response by maintaining lysosome function and regulating T-cell metabolism. Acts as a regulator of inflammation by mediating pH-sensing of extracellular acidification which takes place in inflamed tissues: activation regulates endo-lysosomal function of immune cells and T-cell metabolism. Constitutively active in endosomes and stimulates adenylate cyclase production from endosomes independently from extracellular pH changes. The protein is G-protein coupled receptor 65 of Homo sapiens (Human).